A 182-amino-acid chain; its full sequence is Large ribosomal subunit protein uL6 (182 aa).

This sequence belongs to the universal ribosomal protein uL6 family. In terms of assembly, part of the 50S ribosomal subunit.

In terms of biological role, this protein binds to the 23S rRNA, and is important in its secondary structure. It is located near the subunit interface in the base of the L7/L12 stalk, and near the tRNA binding site of the peptidyltransferase center. This chain is Large ribosomal subunit protein uL6, found in Dehalococcoides mccartyi (strain CBDB1).